Consider the following 238-residue polypeptide: Ribonuclease 3 (238 aa).

Residues 17-140 form the RNase III domain; it reads YATLEKALGY…LMAGVYLEAG (124 aa). Residue Glu-53 participates in Mg(2+) binding. Asp-57 is an active-site residue. 2 residues coordinate Mg(2+): Ser-126 and Glu-129. Glu-129 is a catalytic residue. One can recognise a DRBM domain in the interval 167-236; the sequence is DYKTALQELT…AYQALQKLKE (70 aa).

Belongs to the ribonuclease III family. In terms of assembly, homodimer. Mg(2+) is required as a cofactor.

It localises to the cytoplasm. The enzyme catalyses Endonucleolytic cleavage to 5'-phosphomonoester.. Digests double-stranded RNA. Involved in the processing of primary rRNA transcript to yield the immediate precursors to the large and small rRNAs (23S and 16S). Processes some mRNAs, and tRNAs when they are encoded in the rRNA operon. Processes pre-crRNA and tracrRNA of type II CRISPR loci if present in the organism. The protein is Ribonuclease 3 of Helicobacter pylori (strain Shi470).